The following is a 590-amino-acid chain: Protein I'm not dead yet (590 aa).

A run of 11 helical transmembrane segments spans residues 43 to 63 (GLVV…NEGA), 82 to 102 (ALPL…MGIM), 115 to 135 (TLVM…CNLH), 153 to 173 (LHFG…NAAC), 224 to 244 (LCYY…TIIG), 270 to 290 (TFMF…FVFL), 329 to 349 (LGPM…MVVM), 373 to 393 (SMPT…YAFL), 457 to 477 (VLPN…LTAF), 509 to 529 (AGLA…NALV), and 540 to 560 (MAIA…VFCQ).

Belongs to the SLC13A/DASS transporter (TC 2.A.47) family. NADC subfamily. As to expression, in adults, abundantly expressed in the fat body, basolateral region of midgut cells and oenocytes. Low level expression is seen in the halteres, procardia, restricted regions of the esophagus and hindgut, base of the legs and in a subset of cells in the third segment of the antennae.

The protein resides in the basolateral cell membrane. Its function is as follows. Cation-independent electroneutral transporter (not associated with membrane depolarization) of a variety of tricarboxylic and dicarboxylic acid-cycle intermediates. There is also small, but detectable, transport of monocarboxylics. Transport is through the epithelium of the gut and across the plasma membranes of organs involved in intermediary metabolism and storage. Affinity for substrates is citrate &gt; succinate &gt; pyruvate. Fumarate, a-ketoglutarate, and glutarate are also transported, but not lactate. Transport mechanism that is not coupled to Na(+), K(+), or Cl(-). Function is shown in Xenopus oocytes and human retinal pigment epithelial (HRPE) cell lines. This Drosophila melanogaster (Fruit fly) protein is Protein I'm not dead yet (Indy).